The chain runs to 205 residues: Dephospho-CoA kinase (205 aa).

A DPCK domain is found at 4-204; the sequence is VVGLTGGIAS…QYYLTLATQQ (201 aa). 12–17 is an ATP binding site; that stretch reads ASGKTT.

Belongs to the CoaE family.

It localises to the cytoplasm. The catalysed reaction is 3'-dephospho-CoA + ATP = ADP + CoA + H(+). It functions in the pathway cofactor biosynthesis; coenzyme A biosynthesis; CoA from (R)-pantothenate: step 5/5. Its function is as follows. Catalyzes the phosphorylation of the 3'-hydroxyl group of dephosphocoenzyme A to form coenzyme A. The protein is Dephospho-CoA kinase of Haemophilus ducreyi (strain 35000HP / ATCC 700724).